We begin with the raw amino-acid sequence, 642 residues long: Voltage-gated potassium channel KCNC2 (642 aa).

Residues 1 to 233 (MGKIESNERV…EDPYSSRAAR (233 aa)) lie on the Cytoplasmic side of the membrane. Residues 45-98 (DCLTAAGDKLQPLPPPLSPPPRPPPLSPVPSGCFEGGAGNCSSHGGNGGNGGSD) form a disordered region. Pro residues predominate over residues 56–72 (PLPPPLSPPPRPPPLSP). Gly residues predominate over residues 78 to 98 (FEGGAGNCSSHGGNGGNGGSD). Positions 128, 134, 155, and 156 each coordinate Zn(2+). A helical membrane pass occupies residues 234–254 (FIAFASLFFILVSITTFCLET). 2 N-linked (GlcNAc...) asparagine glycosylation sites follow: N263 and N270. The chain crosses the membrane as a helical span at residues 287–307 (TYVEGVCVVWFTFEFLVRIVF). The Cytoplasmic portion of the chain corresponds to 308-317 (SPNKLEFIKN). A helical transmembrane segment spans residues 318–338 (LLNIIDFVAILPFYLEVGLSG). Residues 350–372 (FLRVVRFVRILRIFKLTRHFVGL) traverse the membrane as a helical; Voltage-sensor segment. The Cytoplasmic segment spans residues 373–385 (RVLGHTLRASTNE). A helical membrane pass occupies residues 386–406 (FLLLIIFLALGVLIFATMIYY). The K(+) site is built by T441, L442, G443, and Y444. A Selectivity filter motif is present at residues 441–446 (TLGYGD). A helical transmembrane segment spans residues 457-477 (VGALCALAGVLTIAMPVPVIV). The Cytoplasmic segment spans residues 478-642 (NNFGMYYSLA…RSRSPIPSIL (165 aa)). Positions 542 to 576 (SVLSGDDSTGSEPPLSPPERLPIRRSSTRDKNRRG) are disordered. S604 carries the phosphoserine modification.

This sequence belongs to the potassium channel family. C (Shaw) (TC 1.A.1.2) subfamily. Kv3.2/KCNC2 sub-subfamily. As to quaternary structure, homotetramer and heterotetramer with other channel-forming alpha subunits, such as KCNC1. Interacts with KCNC1. Homotetramer or heterotetramer channel activity is regulated by association with modulating ancillary subunits such as KCNE1, KCNE2 and KCNE3, creating a functionally diverse range of channel complexes. Interacts with KCNE1, KCNE2 and KCNE3. Phosphorylated by PKA in cortical synaptosomes. cAMP-dependent phosphorylation inhibits channel activity. Histamine H2 receptor- and PKA-induced phosphorylation extends action potential spike duration, reduces action potential spike amplitude, sustains maximum firing frequency in hippocampal interneurons; also reduces the incidence of high-frequency oscillations in hippocampal CA3 pyramidal cell layers. As to expression, weakly expressed in the brain at postnatal age day 7 (P7) and increased at P60. Not detectable in newborn hippocampus. Expressed weakly at P7 in the early developing hippocampus, increasing progressively and reaching a plateau of expression at P14 that is maintained throughout P51. Expressed in paravalbumin- and somatostain-containing inhibitory interneurons of the hippocampus; in the CA1/CA3 stratum oriens-alveus and stratum pyramidale and in cells within the hilus and subgranular layer of the dentate gyrus (DG). Strongly expressed in parvalbumin (PV)-containing fast-spiking GABAergic inhibitor interneurons in deep cortical layers V and VI. Also expressed in non-fast-spiking calbindin (CB)- and/or somatostatin (SOM)-containing interneurons in deep cortical layers V and VI. Expressed in starburst amacrine cells of the retina in the inner nuclear layer (INL) and ganglion cell layer (GCL). Expressed in the suprachiasmatic nucleus (SCN) (at protein level). Expressed in the early developing brain, increasing progressively until P14.

Its subcellular location is the cell membrane. The protein localises to the membrane. The protein resides in the perikaryon. It localises to the cell projection. It is found in the axon. Its subcellular location is the dendrite. The protein localises to the postsynaptic cell membrane. The protein resides in the presynaptic cell membrane. It localises to the synapse. It is found in the synaptosome. Its subcellular location is the apical cell membrane. The protein localises to the basolateral cell membrane. It catalyses the reaction K(+)(in) = K(+)(out). With respect to regulation, inhibited by millimolar levels of tetraethylammonium (TEA). Contrary to other channels, inhibited only by millimolar levels of 4-aminopyridine (4-AP). Inhibited by Stichodactyla helianthus peptide ShK. Functionally, voltage-gated potassium channel that mediates transmembrane potassium transport in excitable membranes, primarily in the brain. Contributes to the regulation of the fast action potential repolarization and in sustained high-frequency firing in neurons of the central nervous system. Homotetramer channels mediate delayed-rectifier voltage-dependent potassium currents that activate rapidly at high-threshold voltages and inactivate slowly. Forms tetrameric channels through which potassium ions pass in accordance with their electrochemical gradient. The channel alternates between opened and closed conformations in response to the voltage difference across the membrane. Can form functional homotetrameric and heterotetrameric channels that contain variable proportions of KCNC1, and possibly other family members as well; channel properties depend on the type of alpha subunits that are part of the channel. Channel properties may be modulated by either the association with ancillary subunits, such as KCNE1, KCNE2 and KCNE3 or indirectly by nitric oxide (NO) through a cGMP- and PKG-mediated signaling cascade, slowing channel activation and deactivation of delayed rectifier potassium channels. Contributes to fire sustained trains of very brief action potentials at high frequency in thalamocortical and suprachiasmatic nucleus (SCN) neurons, in hippocampal and neocortical interneurons and in retinal ganglion cells. Sustained maximal action potential firing frequency in inhibitory hippocampal interneurons is negatively modulated by histamine H2 receptor activation in a cAMP- and protein kinase (PKA) phosphorylation-dependent manner. Plays a role in maintaining the fidelity of synaptic transmission in neocortical GABAergic interneurons by generating action potential (AP) repolarization at nerve terminals, thus reducing spike-evoked calcium influx and GABA neurotransmitter release. Required for long-range synchronization of gamma oscillations over distance in the neocortex. Contributes to the modulation of the circadian rhythm of spontaneous action potential firing in suprachiasmatic nucleus (SCN) neurons in a light-dependent manner. This Mus musculus (Mouse) protein is Voltage-gated potassium channel KCNC2.